Here is a 350-residue protein sequence, read N- to C-terminus: GTPase Obg (350 aa).

In terms of domain architecture, Obg spans 1–159 (MKLVDEAEIE…RTLKLELKLL (159 aa)). Positions 126 to 147 (GNMHFKSSTNRSPRQALPGEPG) are disordered. The 178-residue stretch at 160–337 (ADVGLLGFPN…IMSRIMAFFD (178 aa)) folds into the OBG-type G domain. GTP is bound by residues 166–173 (GFPNAGKS), 191–195 (FTTLY), 213–216 (DIPG), 287–290 (NKAD), and 318–320 (SAL). Mg(2+) is bound by residues serine 173 and threonine 193.

The protein belongs to the TRAFAC class OBG-HflX-like GTPase superfamily. OBG GTPase family. As to quaternary structure, monomer. The cofactor is Mg(2+).

It is found in the cytoplasm. Its function is as follows. An essential GTPase which binds GTP, GDP and possibly (p)ppGpp with moderate affinity, with high nucleotide exchange rates and a fairly low GTP hydrolysis rate. Plays a role in control of the cell cycle, stress response, ribosome biogenesis and in those bacteria that undergo differentiation, in morphogenesis control. This is GTPase Obg from Stenotrophomonas maltophilia (strain K279a).